Reading from the N-terminus, the 73-residue chain is uncharacterized protein (73 aa).

Residues Asn-20–Thr-49 are a coiled coil.

This is an uncharacterized protein from Acheta domesticus (House cricket).